The sequence spans 354 residues: Methylthioribose-1-phosphate isomerase (354 aa).

Residues 45–47, arginine 87, and glutamine 204 contribute to the substrate site; that span reads RGA. Aspartate 245 (proton donor) is an active-site residue. A substrate-binding site is contributed by 255-256; it reads NK.

The protein belongs to the eIF-2B alpha/beta/delta subunits family. MtnA subfamily.

It carries out the reaction 5-(methylsulfanyl)-alpha-D-ribose 1-phosphate = 5-(methylsulfanyl)-D-ribulose 1-phosphate. It participates in amino-acid biosynthesis; L-methionine biosynthesis via salvage pathway; L-methionine from S-methyl-5-thio-alpha-D-ribose 1-phosphate: step 1/6. Functionally, catalyzes the interconversion of methylthioribose-1-phosphate (MTR-1-P) into methylthioribulose-1-phosphate (MTRu-1-P). The chain is Methylthioribose-1-phosphate isomerase from Chlorobaculum tepidum (strain ATCC 49652 / DSM 12025 / NBRC 103806 / TLS) (Chlorobium tepidum).